The chain runs to 300 residues: Ribosomal RNA small subunit methyltransferase H (300 aa).

Residues Gly-36–His-38, Asp-55, Leu-89, Asp-103, and Gln-110 contribute to the S-adenosyl-L-methionine site.

Belongs to the methyltransferase superfamily. RsmH family.

It is found in the cytoplasm. The catalysed reaction is cytidine(1402) in 16S rRNA + S-adenosyl-L-methionine = N(4)-methylcytidine(1402) in 16S rRNA + S-adenosyl-L-homocysteine + H(+). Specifically methylates the N4 position of cytidine in position 1402 (C1402) of 16S rRNA. In Thermotoga neapolitana (strain ATCC 49049 / DSM 4359 / NBRC 107923 / NS-E), this protein is Ribosomal RNA small subunit methyltransferase H.